The chain runs to 2171 residues: DExH-box ATP-dependent RNA helicase DExH12 (2171 aa).

Disordered stretches follow at residues 24-80, 218-267, and 383-426; these read SLVL…KERD, EENE…NEGT, and TAKE…ESGW. 2 stretches are compositionally biased toward basic and acidic residues: residues 31–40 and 50–80; these read NRPRDTHEPT and IDPR…KERD. Residues 218 to 242 are compositionally biased toward acidic residues; sequence EENEEDDEESDPDMVEEDDDEEDDE. Residues 383-423 are compositionally biased toward basic and acidic residues; that stretch reads TAKEREENLQKSINEEARRLKDETGGDGGRGRRDVADRDSE. Residues 514-697 enclose the Helicase ATP-binding 1 domain; the sequence is DTALFKAENI…FLRVDLKKGL (184 aa). Residue 527–534 coordinates ATP; sequence APTGAGKT. The short motif at 639–642 is the DEIH box element; sequence DEIH. One can recognise a Helicase C-terminal 1 domain in the interval 731–941; the sequence is LCYQKVLAGA…GTVQNAREAC (211 aa). Residues 1006–1308 enclose the SEC63 1 domain; the sequence is TDLGRIASYY…WLGSETVLPV (303 aa). The region spanning 1360-1537 is the Helicase ATP-binding 2 domain; the sequence is TVLYNTNDNV…WIGASSHGLF (178 aa). Residue 1373–1380 coordinates ATP; the sequence is APTGSGKT. A DELH box motif is present at residues 1479–1482; sequence DELH. One can recognise a Helicase C-terminal 2 domain in the interval 1574-1779; that stretch reads AIVQHAKNKK…GVIENKQDAV (206 aa). The SEC63 2 domain maps to 1839–2157; the sequence is PLNLGMIASY…LGCDQEYSFS (319 aa).

The protein belongs to the DExH box helicase family. As to quaternary structure, interacts with CLO.

The protein resides in the nucleus. It catalyses the reaction ATP + H2O = ADP + phosphate + H(+). RNA helicase that plays an essential role in pre-mRNA splicing as component of the U5 snRNP and U4/U6-U5 tri-snRNP complexes. Involved in spliceosome assembly, activation and disassembly. This chain is DExH-box ATP-dependent RNA helicase DExH12, found in Arabidopsis thaliana (Mouse-ear cress).